Reading from the N-terminus, the 290-residue chain is 33 kDa chaperonin (290 aa).

Disulfide bonds link Cys235–Cys237 and Cys268–Cys271.

It belongs to the HSP33 family. Under oxidizing conditions two disulfide bonds are formed involving the reactive cysteines. Under reducing conditions zinc is bound to the reactive cysteines and the protein is inactive.

The protein localises to the cytoplasm. Functionally, redox regulated molecular chaperone. Protects both thermally unfolding and oxidatively damaged proteins from irreversible aggregation. Plays an important role in the bacterial defense system toward oxidative stress. This chain is 33 kDa chaperonin, found in Streptococcus gordonii (strain Challis / ATCC 35105 / BCRC 15272 / CH1 / DL1 / V288).